We begin with the raw amino-acid sequence, 291 residues long: ATP synthase gamma chain (291 aa).

This sequence belongs to the ATPase gamma chain family. F-type ATPases have 2 components, CF(1) - the catalytic core - and CF(0) - the membrane proton channel. CF(1) has five subunits: alpha(3), beta(3), gamma(1), delta(1), epsilon(1). CF(0) has three main subunits: a, b and c.

Its subcellular location is the cell membrane. Produces ATP from ADP in the presence of a proton gradient across the membrane. The gamma chain is believed to be important in regulating ATPase activity and the flow of protons through the CF(0) complex. The chain is ATP synthase gamma chain from Lachnoclostridium phytofermentans (strain ATCC 700394 / DSM 18823 / ISDg) (Clostridium phytofermentans).